The chain runs to 637 residues: MGSPRLAALLLSQPLLFICLAVSAQVACPCLPRWTSHCLLAFRVDKHFAGLQCGWFPLLVRKSKSSHEFEVCWRHWTPSPFQRKLLGSPSLSQESHRISTHFLAISHRGLRTKRTQPSAAEGIEHLPGAGSQKHGGPEFSFDLLPEVQAIRVTIPPGPEANVRLCYQWALECEDMSSPFDTQKIVSGGHTVDLPYEFLLPCMCIEASYLQEDTVRHKKCPFRSWPEAYGSDFWKSIRFTDYSQHSQMVMALTLRCPLKLEASLCWRQDPVTPCKILPNATAKESEGWYILENVDLHPQLCFKFSFENSSHVECPHQSGSLPSWTVSMDTQAQQLILHFSTRTYATFSAAWSNPGLGLDSSMTPVYSISQTQGSVPVTLNLIIPFLRQGSCILVWRSDVQFAWKHLLCPDVSHRHLGLLILALLGLTTLLGVVLVLFCRRLLPGPGRTRPVLLLHAADSEAQRRLVGALAELLRTALGGGRDVIVDLWEGTHVARIGPLPWLWAARERVAREQGTVLLLWSCAGPSTACSGDPQTASLRTLSCAAPRQLLLAYFSRLCAKGDIPGPLRALPRYRLLRDLPRLLRALDARPATLATSWSHLGAKECLKSRLELCHLLELEAAKDDYHGSTNSPCGFSCL.

An N-terminal signal peptide occupies residues 1–24; that stretch reads MGSPRLAALLLSQPLLFICLAVSA. Over 25 to 415 the chain is Extracellular; it reads QVACPCLPRW…LCPDVSHRHL (391 aa). 2 N-linked (GlcNAc...) asparagine glycosylation sites follow: N278 and N307. A helical transmembrane segment spans residues 416 to 436; that stretch reads GLLILALLGLTTLLGVVLVLF. Topologically, residues 437 to 637 are cytoplasmic; the sequence is CRRLLPGPGR…TNSPCGFSCL (201 aa). The 137-residue stretch at 447–583 folds into the SEFIR domain; that stretch reads TRPVLLLHAA…LLRDLPRLLR (137 aa).

Forms heterodimers with IL17RE; the heterodimer binds IL17C.

The protein resides in the cell membrane. Specific functional receptor for IL17C, signaling through the NF-kappa-B and MAPK pathways. Requires TRAF3IP2 /ACT1 for signaling. Crucial regulator in innate immunity to bacterial pathogens. The polypeptide is Interleukin-17 receptor E (Il17re) (Rattus norvegicus (Rat)).